Reading from the N-terminus, the 268-residue chain is Small ribosomal subunit protein eS1 (268 aa).

The segment at 1–21 is disordered; the sequence is MAVGKNKGLSKGGKKGGKKKV.

The protein belongs to the eukaryotic ribosomal protein eS1 family. In terms of assembly, component of the small ribosomal subunit. Mature ribosomes consist of a small (40S) and a large (60S) subunit. The 40S subunit contains about 33 different proteins and 1 molecule of RNA (18S). The 60S subunit contains about 49 different proteins and 3 molecules of RNA (28S, 5.8S and 5S).

The protein resides in the cytoplasm. Essential for oogenesis; required for late follicle cell development. This chain is Small ribosomal subunit protein eS1, found in Drosophila erecta (Fruit fly).